Consider the following 1433-residue polypeptide: DNA-directed RNA polymerase subunit beta' (1433 aa).

4 residues coordinate Zn(2+): C66, C68, C81, and C84. Residues D473, D475, and D477 each contribute to the Mg(2+) site. Residues C815, C889, C896, and C899 each coordinate Zn(2+).

This sequence belongs to the RNA polymerase beta' chain family. The RNAP catalytic core consists of 2 alpha, 1 beta, 1 beta' and 1 omega subunit. When a sigma factor is associated with the core the holoenzyme is formed, which can initiate transcription. Requires Mg(2+) as cofactor. The cofactor is Zn(2+).

The enzyme catalyses RNA(n) + a ribonucleoside 5'-triphosphate = RNA(n+1) + diphosphate. In terms of biological role, DNA-dependent RNA polymerase catalyzes the transcription of DNA into RNA using the four ribonucleoside triphosphates as substrates. The protein is DNA-directed RNA polymerase subunit beta' of Porphyromonas gingivalis (strain ATCC 33277 / DSM 20709 / CIP 103683 / JCM 12257 / NCTC 11834 / 2561).